The sequence spans 203 residues: Pyridoxal 5'-phosphate synthase subunit PdxT (203 aa).

Gly49–Ser51 contacts L-glutamine. Cys81 acts as the Nucleophile in catalysis. Residues Arg110 and Ile139–Arg140 each bind L-glutamine. Active-site charge relay system residues include His175 and Glu177.

It belongs to the glutaminase PdxT/SNO family. As to quaternary structure, in the presence of PdxS, forms a dodecamer of heterodimers. Only shows activity in the heterodimer.

The catalysed reaction is aldehydo-D-ribose 5-phosphate + D-glyceraldehyde 3-phosphate + L-glutamine = pyridoxal 5'-phosphate + L-glutamate + phosphate + 3 H2O + H(+). It carries out the reaction L-glutamine + H2O = L-glutamate + NH4(+). It functions in the pathway cofactor biosynthesis; pyridoxal 5'-phosphate biosynthesis. In terms of biological role, catalyzes the hydrolysis of glutamine to glutamate and ammonia as part of the biosynthesis of pyridoxal 5'-phosphate. The resulting ammonia molecule is channeled to the active site of PdxS. This Parafrankia sp. (strain EAN1pec) protein is Pyridoxal 5'-phosphate synthase subunit PdxT.